Reading from the N-terminus, the 258-residue chain is Ribosomal RNA large subunit methyltransferase E (258 aa).

The S-adenosyl-L-methionine site is built by Gly58, Trp60, Asp78, Asp96, and Asp120. Lys160 functions as the Proton acceptor in the catalytic mechanism.

Belongs to the class I-like SAM-binding methyltransferase superfamily. RNA methyltransferase RlmE family.

Its subcellular location is the cytoplasm. It carries out the reaction uridine(2552) in 23S rRNA + S-adenosyl-L-methionine = 2'-O-methyluridine(2552) in 23S rRNA + S-adenosyl-L-homocysteine + H(+). In terms of biological role, specifically methylates the uridine in position 2552 of 23S rRNA at the 2'-O position of the ribose in the fully assembled 50S ribosomal subunit. The polypeptide is Ribosomal RNA large subunit methyltransferase E (Methanococcus maripaludis (strain DSM 14266 / JCM 13030 / NBRC 101832 / S2 / LL)).